The primary structure comprises 298 residues: Small ribosomal subunit protein uS3 (298 aa).

The KH type-2 domain maps to 38 to 106 (IRRRLSRGME…QVQLNILEVK (69 aa)). The tract at residues 212-298 (KQKQQESEVR…EPRADEKTEG (87 aa)) is disordered. The segment covering 214–237 (KQQESEVRPPRGERGERGGRPERG) has biased composition (basic and acidic residues). Residues 265 to 278 (GSAQSPEQAQTSGD) are compositionally biased toward polar residues.

The protein belongs to the universal ribosomal protein uS3 family. In terms of assembly, part of the 30S ribosomal subunit. Forms a tight complex with proteins S10 and S14.

Functionally, binds the lower part of the 30S subunit head. Binds mRNA in the 70S ribosome, positioning it for translation. The protein is Small ribosomal subunit protein uS3 of Saccharopolyspora erythraea (strain ATCC 11635 / DSM 40517 / JCM 4748 / NBRC 13426 / NCIMB 8594 / NRRL 2338).